The following is a 297-amino-acid chain: Ribosomal RNA small subunit methyltransferase H (297 aa).

S-adenosyl-L-methionine-binding positions include 37–39 (GGH), E56, F87, D102, and H109.

Belongs to the methyltransferase superfamily. RsmH family.

The protein localises to the cytoplasm. The enzyme catalyses cytidine(1402) in 16S rRNA + S-adenosyl-L-methionine = N(4)-methylcytidine(1402) in 16S rRNA + S-adenosyl-L-homocysteine + H(+). Specifically methylates the N4 position of cytidine in position 1402 (C1402) of 16S rRNA. The polypeptide is Ribosomal RNA small subunit methyltransferase H (Borrelia hermsii (strain HS1 / DAH)).